We begin with the raw amino-acid sequence, 497 residues long: Virion host shutoff protein (497 aa).

Disordered stretches follow at residues 122-142 (EHDT…PPQD) and 280-373 (SVIS…SAEA). A compositionally biased stretch (basic and acidic residues) spans 309–326 (PNERRVISWRRQDDHDYD). Residues 327 to 344 (SSTEDSDQSDSSEEEEEC) show a composition bias toward acidic residues.

This sequence belongs to the herpesviridae VHS protein family.

It is found in the virion. In terms of biological role, minor structural protein that acts as an endoribonuclease during lytic infection. Degrades host mRNAs in the cytoplasm by cutting them at preferred sites, including some in regions of translation initiation. The chain is Virion host shutoff protein from Equine herpesvirus 1 (strain Ab4p) (EHV-1).